The primary structure comprises 901 residues: Protein translocase subunit SecA (901 aa).

ATP contacts are provided by residues Q85, 103–107 (GEGKT), and D510. The disordered stretch occupies residues 847–901 (TRINQNNLPVDENSQTTQNSETEDYSDRRIGRNEPCPCGSGKKYKHCHGSRVARQ). Polar residues predominate over residues 848–866 (RINQNNLPVDENSQTTQNS). Zn(2+) is bound by residues C882, C884, C893, and H894. Positions 888–901 (KKYKHCHGSRVARQ) are enriched in basic residues.

The protein belongs to the SecA family. In terms of assembly, monomer and homodimer. Part of the essential Sec protein translocation apparatus which comprises SecA, SecYEG and auxiliary proteins SecDF-YajC and YidC. Requires Zn(2+) as cofactor.

It localises to the cell inner membrane. It is found in the cytoplasm. It catalyses the reaction ATP + H2O + cellular proteinSide 1 = ADP + phosphate + cellular proteinSide 2.. Part of the Sec protein translocase complex. Interacts with the SecYEG preprotein conducting channel. Has a central role in coupling the hydrolysis of ATP to the transfer of proteins into and across the cell membrane, serving both as a receptor for the preprotein-SecB complex and as an ATP-driven molecular motor driving the stepwise translocation of polypeptide chains across the membrane. This is Protein translocase subunit SecA from Haemophilus influenzae (strain PittGG).